The following is a 154-amino-acid chain: 17 kDa surface antigen (154 aa).

The first 19 residues, 1 to 19 (MKLLSKIMIIALAASTLQA), serve as a signal peptide directing secretion. A lipid anchor (N-palmitoyl cysteine) is attached at C20. C20 is lipidated: S-diacylglycerol cysteine.

Belongs to the rickettsiale 17 kDa surface antigen family.

The protein localises to the cell outer membrane. This Rickettsia amblyommatis (Rickettsia amblyommii) protein is 17 kDa surface antigen (omp).